Here is a 372-residue protein sequence, read N- to C-terminus: Glutamine synthetase (372 aa).

Residues 24–103 (VIAEYVWVDG…VLAECFNSDG (80 aa)) enclose the GS beta-grasp domain. One can recognise a GS catalytic domain in the interval 110 to 372 (HRHEANKLFQ…KEYERETNEQ (263 aa)).

The protein belongs to the glutamine synthetase family. As to quaternary structure, homooctamer.

The protein resides in the cytoplasm. It carries out the reaction L-glutamate + NH4(+) + ATP = L-glutamine + ADP + phosphate + H(+). The polypeptide is Glutamine synthetase (GLN1) (Candida glabrata (strain ATCC 2001 / BCRC 20586 / JCM 3761 / NBRC 0622 / NRRL Y-65 / CBS 138) (Yeast)).